The chain runs to 259 residues: DNA-directed RNA polymerase 30 kDa polypeptide (259 aa).

A TFIIS-type zinc finger spans residues 155–195 (YNTPCPNCKSRNTTPMMIQTRAADEPPLVRHACRDCKQHFK). The Zn(2+) site is built by Cys-159, Cys-162, Cys-187, and Cys-190. Residues 220–259 (EILPDNNPSPPESPEPASPIDDGLIRVTFDRNDEPPEDDE) form a disordered region. A compositionally biased stretch (pro residues) spans 226–236 (NPSPPESPEPA).

Belongs to the poxviridae DNA-directed RNA polymerase 30 kDa subunit family. The DNA-dependent RNA polymerase (vRNAP) consists of eight subunits encoded by early viral genes and termed according to their apparent molecular masses Rpo147, Rpo132, Rpo35, Rpo30, Rpo22, Rpo19, Rpo18, and Rpo7. The same holoenzyme, with the addition of the transcription-specificity factor RAP94, is used for early gene expression.

The protein localises to the virion. It is found in the host cytoplasm. The catalysed reaction is RNA(n) + a ribonucleoside 5'-triphosphate = RNA(n+1) + diphosphate. Functionally, part of the DNA-dependent RNA polymerase which catalyzes the transcription of viral DNA into RNA using the four ribonucleoside triphosphates as substrates. Responsible for the transcription of early, intermediate and late genes. DNA-dependent RNA polymerase associates with the early transcription factor (ETF), itself composed of OPG118 and OPG134, thereby allowing the early genes transcription. Late transcription, and probably also intermediate transcription, require newly synthesized RNA polymerase. In Variola virus (isolate Human/India/Ind3/1967) (VARV), this protein is DNA-directed RNA polymerase 30 kDa polypeptide (OPG066).